A 376-amino-acid chain; its full sequence is MAKPFSFKVLATDGRARRGIIDMPRGEIRTPAFMPVGTGGTVKTMYMDQVRGVGADIILGNTYHLMLRPGAERVARLGGLHEFARWPHPILTDSGGFQVMSLSKLRKLTEKGVTFRSHIDGAPYEMSPERSIEIQSLLDSDIQMQLDECTALPAELKEIERAMELSLRWAERCKTAFGDQPGKAMFGIVQGGDNAALRVRSAQALSAMGLKGYAVGGLAVGEPQAVMLEMLDITCPELPADKPRYLMGVGTPDDILKSVARGIDMFDCVMPTRAGRHGLAYTRRGKVNLRNARHADDPRPLDEESDCPAARDYSRAYLHHLVRSQEALGAMLLTWNNLSYYQKLMQDIRAAIETQTFEARGAEITEGWARGDIPVL.

Residue Asp93 is the Proton acceptor of the active site. Residues 93–97 (DSGGF), Asp147, Gln190, and Gly217 each bind substrate. The interval 248–254 (GVGTPDD) is RNA binding. Catalysis depends on Asp267, which acts as the Nucleophile. Residues 272–276 (TRAGR) form an RNA binding; important for wobble base 34 recognition region.

This sequence belongs to the queuine tRNA-ribosyltransferase family. As to quaternary structure, homodimer. Within each dimer, one monomer is responsible for RNA recognition and catalysis, while the other monomer binds to the replacement base PreQ1.

The catalysed reaction is 7-aminomethyl-7-carbaguanine + guanosine(34) in tRNA = 7-aminomethyl-7-carbaguanosine(34) in tRNA + guanine. It participates in tRNA modification; tRNA-queuosine biosynthesis. Its function is as follows. Catalyzes the base-exchange of a guanine (G) residue with the queuine precursor 7-aminomethyl-7-deazaguanine (PreQ1) at position 34 (anticodon wobble position) in tRNAs with GU(N) anticodons (tRNA-Asp, -Asn, -His and -Tyr). Catalysis occurs through a double-displacement mechanism. The nucleophile active site attacks the C1' of nucleotide 34 to detach the guanine base from the RNA, forming a covalent enzyme-RNA intermediate. The proton acceptor active site deprotonates the incoming PreQ1, allowing a nucleophilic attack on the C1' of the ribose to form the product. After dissociation, two additional enzymatic reactions on the tRNA convert PreQ1 to queuine (Q), resulting in the hypermodified nucleoside queuosine (7-(((4,5-cis-dihydroxy-2-cyclopenten-1-yl)amino)methyl)-7-deazaguanosine). This Mesorhizobium japonicum (strain LMG 29417 / CECT 9101 / MAFF 303099) (Mesorhizobium loti (strain MAFF 303099)) protein is Queuine tRNA-ribosyltransferase.